The chain runs to 331 residues: 4-hydroxy-3-methylbut-2-enyl diphosphate reductase (331 aa).

Position 12 (C12) interacts with [4Fe-4S] cluster. Positions 43 and 81 each coordinate (2E)-4-hydroxy-3-methylbut-2-enyl diphosphate. Positions 43 and 81 each coordinate dimethylallyl diphosphate. Isopentenyl diphosphate is bound by residues H43 and H81. C103 serves as a coordination point for [4Fe-4S] cluster. H131 is a binding site for (2E)-4-hydroxy-3-methylbut-2-enyl diphosphate. A dimethylallyl diphosphate-binding site is contributed by H131. H131 contacts isopentenyl diphosphate. Residue E133 is the Proton donor of the active site. T170 provides a ligand contact to (2E)-4-hydroxy-3-methylbut-2-enyl diphosphate. C198 lines the [4Fe-4S] cluster pocket. Residues S226, N228, and S271 each contribute to the (2E)-4-hydroxy-3-methylbut-2-enyl diphosphate site. S226, N228, and S271 together coordinate dimethylallyl diphosphate. Residues S226, N228, and S271 each contribute to the isopentenyl diphosphate site.

The protein belongs to the IspH family. [4Fe-4S] cluster serves as cofactor.

The enzyme catalyses isopentenyl diphosphate + 2 oxidized [2Fe-2S]-[ferredoxin] + H2O = (2E)-4-hydroxy-3-methylbut-2-enyl diphosphate + 2 reduced [2Fe-2S]-[ferredoxin] + 2 H(+). It catalyses the reaction dimethylallyl diphosphate + 2 oxidized [2Fe-2S]-[ferredoxin] + H2O = (2E)-4-hydroxy-3-methylbut-2-enyl diphosphate + 2 reduced [2Fe-2S]-[ferredoxin] + 2 H(+). It functions in the pathway isoprenoid biosynthesis; dimethylallyl diphosphate biosynthesis; dimethylallyl diphosphate from (2E)-4-hydroxy-3-methylbutenyl diphosphate: step 1/1. Its pathway is isoprenoid biosynthesis; isopentenyl diphosphate biosynthesis via DXP pathway; isopentenyl diphosphate from 1-deoxy-D-xylulose 5-phosphate: step 6/6. In terms of biological role, catalyzes the conversion of 1-hydroxy-2-methyl-2-(E)-butenyl 4-diphosphate (HMBPP) into a mixture of isopentenyl diphosphate (IPP) and dimethylallyl diphosphate (DMAPP). Acts in the terminal step of the DOXP/MEP pathway for isoprenoid precursor biosynthesis. The chain is 4-hydroxy-3-methylbut-2-enyl diphosphate reductase from Listeria monocytogenes serotype 4b (strain CLIP80459).